Consider the following 274-residue polypeptide: Penicillin-insensitive murein endopeptidase (274 aa).

The signal sequence occupies residues 1–19 (MNKTAIALLALLASSASLA). 3 disulfides stabilise this stretch: cysteine 44/cysteine 265, cysteine 187/cysteine 235, and cysteine 216/cysteine 223. Positions 110, 113, 120, 147, 150, and 211 each coordinate Zn(2+). The segment at 228-264 (LPPPGDGCGAELQSWFAPPKPGTTKPEKKTPSPLPPS) is disordered.

Belongs to the peptidase M74 family. As to quaternary structure, dimer. Zn(2+) serves as cofactor.

It is found in the periplasm. Murein endopeptidase that cleaves the D-alanyl-meso-2,6-diamino-pimelyl amide bond that connects peptidoglycan strands. Likely plays a role in the removal of murein from the sacculus. This Escherichia coli (strain 55989 / EAEC) protein is Penicillin-insensitive murein endopeptidase.